The chain runs to 212 residues: ER lumen protein-retaining receptor 1 (212 aa).

The Lumenal portion of the chain corresponds to 1-4 (MNLF). The chain crosses the membrane as a helical span at residues 5-24 (RFLGDLSHLLAIILLLLKIW). At 25–32 (KSRSCAGI) the chain is on the cytoplasmic side. Residues 33–52 (SGKSQVLFAVVFTARYLDLF) traverse the membrane as a helical segment. Positions 47–48 (RY) are interaction with the K-D-E-L motif on target proteins. The Lumenal portion of the chain corresponds to 53–58 (TNYISL). A helical membrane pass occupies residues 59–79 (YNTCMKVVYIACSFTTVWMIY). Residues 80–92 (SKFKATYDGNHDT) are Cytoplasmic-facing. Residues 93-110 (FRVEFLVVPTAILAFLVN) traverse the membrane as a helical segment. Over 111–116 (HDFTPL) the chain is Lumenal. A helical transmembrane segment spans residues 117 to 135 (EILWTFSIYLESVAILPQL). Residues 136–149 (FMVSKTGEAETITS) lie on the Cytoplasmic side of the membrane. Residues 150–168 (HYLFALGVYRTLYLFNWIW) form a helical membrane-spanning segment. The segment at 159–169 (RTLYLFNWIWR) is interaction with the K-D-E-L motif on target proteins. Over 169-178 (RYHFEGFFDL) the chain is Lumenal. A helical transmembrane segment spans residues 179 to 199 (IAIVAGLVQTVLYCDFFYLYI). Topologically, residues 200 to 212 (TKVLKGKKLSLPA) are cytoplasmic. Positions 204 to 207 (KGKK) are important for recycling of cargo proteins with the sequence motif K-D-E-L from the Golgi to the endoplasmic reticulum. Serine 209 carries the post-translational modification Phosphoserine; by PKA.

It belongs to the ERD2 family. Upon ligand binding the receptor oligomerizes and interacts with components of the transport machinery such as ARFGAP1 and ARF1. Post-translationally, phosphorylation by PKA at Ser-209 is required for endoplasmic reticulum retention function.

It is found in the golgi apparatus membrane. Its subcellular location is the cytoplasmic vesicle. The protein localises to the COPI-coated vesicle membrane. The protein resides in the endoplasmic reticulum membrane. It localises to the endoplasmic reticulum-Golgi intermediate compartment membrane. Functionally, receptor for the C-terminal sequence motif K-D-E-L that is present on endoplasmic reticulum resident proteins and that mediates their recycling from the Golgi back to the endoplasmic reticulum. The protein is ER lumen protein-retaining receptor 1 (Kdelr1) of Mus musculus (Mouse).